A 423-amino-acid chain; its full sequence is Glycine amidinotransferase, mitochondrial (423 aa).

A mitochondrion-targeting transit peptide spans 1–43 (MLRVRCLRGGSRGAEALHYIGSRLGRTVTGWVQRTFQSTQAAT). Phosphoserine is present on residues S46 and S49. D170 is a binding site for arginine. Residues D254 and H303 contribute to the active site. 4 residues coordinate arginine: D305, R322, S354, and S355. Residue K385 is modified to N6-acetyllysine. C407 functions as the Amidino-cysteine intermediate in the catalytic mechanism.

The protein belongs to the amidinotransferase family. As to quaternary structure, homodimer.

It localises to the mitochondrion inner membrane. The catalysed reaction is L-arginine + glycine = guanidinoacetate + L-ornithine. It catalyses the reaction 4-aminobutanoate + L-arginine = 4-guanidinobutanoate + L-ornithine. The enzyme catalyses beta-alanine + L-arginine = 3-guanidinopropanoate + L-ornithine. It carries out the reaction taurine + L-arginine = taurocyamine + L-ornithine. The protein operates within amine and polyamine biosynthesis; creatine biosynthesis; creatine from L-arginine and glycine: step 1/2. Functionally, transamidinase that catalyzes the transfer of the amidino group of L-arginine onto the amino moiety of acceptor metabolites such as glycine, beta-alanine, gamma-aminobutyric acid (GABA) and taurine yielding the corresponding guanidine derivatives. Catalyzes the rate-limiting step of creatine biosynthesis, namely the transfer of the amidino group from L-arginine to glycine to generate guanidinoacetate, which is then methylated by GAMT to form creatine. Provides creatine as a source for ATP generation in tissues with high energy demands, in particular skeletal muscle, heart and brain. The sequence is that of Glycine amidinotransferase, mitochondrial (GATM) from Bos taurus (Bovine).